Here is a 424-residue protein sequence, read N- to C-terminus: Tryptophan synthase beta chain (424 aa).

Residue Lys-108 is modified to N6-(pyridoxal phosphate)lysine.

This sequence belongs to the TrpB family. Tetramer of two alpha and two beta chains. Requires pyridoxal 5'-phosphate as cofactor.

It carries out the reaction (1S,2R)-1-C-(indol-3-yl)glycerol 3-phosphate + L-serine = D-glyceraldehyde 3-phosphate + L-tryptophan + H2O. The protein operates within amino-acid biosynthesis; L-tryptophan biosynthesis; L-tryptophan from chorismate: step 5/5. In terms of biological role, the beta subunit is responsible for the synthesis of L-tryptophan from indole and L-serine. The polypeptide is Tryptophan synthase beta chain (trpB) (Thermoplasma acidophilum (strain ATCC 25905 / DSM 1728 / JCM 9062 / NBRC 15155 / AMRC-C165)).